We begin with the raw amino-acid sequence, 504 residues long: Cytochrome P450 71B7 (504 aa).

A helical membrane pass occupies residues 1–21; it reads MSILLCFLCLLPVFLVSLSIL. Residue Lys82 forms a Glycyl lysine isopeptide (Lys-Gly) (interchain with G-Cter in ubiquitin) linkage. Cys446 is a binding site for heme.

Belongs to the cytochrome P450 family. Heme serves as cofactor. In terms of tissue distribution, highly expressed in rosette leaves. Also expressed in roots, leaves, flowers, and siliques.

The protein localises to the membrane. This Arabidopsis thaliana (Mouse-ear cress) protein is Cytochrome P450 71B7 (CYP71B7).